The primary structure comprises 372 residues: MKYLTLLTVLSTALATPLQHQHHHHHEHARRAEVTKVVYVNGNGDEVQSQVTENASSGASSGETAETIQTRSSSDVSSSSDSNPVASIASSVASSASSILSNIEGDLSAFSSPSKKFEDGVYDCDSVPVGQGVIGVDWISGLNGGWTTIMNENGDTSLNCKDGYYCSYACQAGMSKTQWPSEQPSNGMSIGGLYCKNGKLYRSNTDNDYLCEWGSKDVNFVSEISEDVAICRTDYPGSENMNIPTLLSAGGKAPCSVVDGDTYFKWQGGKTSTQYYVNNAGVSVEDGCIWGTEGSGVGNWAPVVLGSGTTGGKTYLSLIPNPNNKDKPNYNIKIVGDDVNGDCKYENGQYNGSGSDGCTVTVNSGSAKFVFY.

A signal peptide spans 1 to 15 (MKYLTLLTVLSTALA). Positions 51–85 (VTENASSGASSGETAETIQTRSSSDVSSSSDSNPV) are disordered. Positions 52–85 (TENASSGASSGETAETIQTRSSSDVSSSSDSNPV) are enriched in low complexity. N-linked (GlcNAc...) asparagine glycans are attached at residues N54 and N351.

It belongs to the SUN family.

The protein resides in the secreted. It is found in the cell wall. Functionally, cell surface beta-glucosidase involved in cell wall maintenance and cytokinesis. Plays a role redundant to SUN41. This Candida albicans (strain SC5314 / ATCC MYA-2876) (Yeast) protein is Secreted beta-glucosidase SIM1 (SIM1).